A 92-amino-acid chain; its full sequence is UPF0250 protein Rmag_0541 (92 aa).

Belongs to the UPF0250 family.

This Ruthia magnifica subsp. Calyptogena magnifica protein is UPF0250 protein Rmag_0541.